The following is a 287-amino-acid chain: Sulfofructosephosphate aldolase (287 aa).

Asp82 serves as the catalytic Proton donor. Zn(2+) contacts are provided by His83 and His180. A dihydroxyacetone phosphate-binding site is contributed by Gly181. Zn(2+) is bound at residue His208. Dihydroxyacetone phosphate contacts are provided by residues 209-211 (GGS) and 230-233 (NVDT).

The protein belongs to the class II fructose-bisphosphate aldolase family. The cofactor is Zn(2+).

It catalyses the reaction 6-deoxy-6-sulfo-D-fructose 1-phosphate = (2S)-3-sulfolactaldehyde + dihydroxyacetone phosphate. Functionally, part of the sulfo-EMP2 pathway, a D-sulfoquinovose degradation pathway that produces sulfolactate (SL). Cleaves 6-deoxy-6-sulfo-D-fructose 1-phosphate (SFP) to form dihydroxyacetone phosphate (DHAP) and 3-sulfolactaldehyde (SLA). The chain is Sulfofructosephosphate aldolase from Alkalicoccus urumqiensis (Bacillus urumqiensis).